Consider the following 408-residue polypeptide: Translation initiation factor 2 subunit gamma (408 aa).

A tr-type G domain is found at 4 to 201; it reads QSEINIGLVG…TIEERIKTPK (198 aa). The segment at 13 to 20 is G1; that stretch reads GHVDHGKT. Residues Asp-16, Thr-20, Gly-41, and Ser-43 each contribute to the Mg(2+) site. 16–21 provides a ligand contact to GTP; the sequence is DHGKTT. Positions 41 to 45 are G2; sequence GISIR. Residues Cys-56, Cys-59, Cys-71, and Cys-74 each coordinate Zn(2+). The segment at 88 to 91 is G3; that stretch reads DAPG. GTP is bound by residues 144-147 and 179-181; these read NKID and SAQ. Residues 144–147 form a G4 region; that stretch reads NKID. The G5 stretch occupies residues 179–181; the sequence is SAQ.

It belongs to the TRAFAC class translation factor GTPase superfamily. Classic translation factor GTPase family. EIF2G subfamily. Heterotrimer composed of an alpha, a beta and a gamma chain. Requires Mg(2+) as cofactor.

The enzyme catalyses GTP + H2O = GDP + phosphate + H(+). EIF-2 functions in the early steps of protein synthesis by forming a ternary complex with GTP and initiator tRNA. The chain is Translation initiation factor 2 subunit gamma from Methanothermobacter thermautotrophicus (strain ATCC 29096 / DSM 1053 / JCM 10044 / NBRC 100330 / Delta H) (Methanobacterium thermoautotrophicum).